Here is a 616-residue protein sequence, read N- to C-terminus: Adenylosuccinate synthetase 1 (616 aa).

Residues 1–27 (MDKQAERGQSAGPVKTPQGTQPPAHNY) form a disordered region. Positions 17 to 27 (PQGTQPPAHNY) are enriched in polar residues. GTP is bound by residues 87 to 93 (GDEGKGK) and 117 to 119 (GHT). D88 acts as the Proton acceptor in catalysis. 2 residues coordinate Mg(2+): D88 and G117. Residues 88-91 (DEGK), 115-118 (NAGH), T202, K216, Q328, T343, and K472 each bind IMP. H118 functions as the Proton donor in the catalytic mechanism. 468–474 (AVTKKPR) provides a ligand contact to substrate. GTP-binding positions include R474 and 603–605 (GNG).

Belongs to the adenylosuccinate synthetase family. As to quaternary structure, homodimer. Mg(2+) serves as cofactor.

The protein localises to the cytoplasm. The enzyme catalyses IMP + L-aspartate + GTP = N(6)-(1,2-dicarboxyethyl)-AMP + GDP + phosphate + 2 H(+). Its pathway is purine metabolism; AMP biosynthesis via de novo pathway; AMP from IMP: step 1/2. In terms of biological role, plays an important role in the salvage pathway for purine nucleotide biosynthesis. Catalyzes the first committed step in the biosynthesis of AMP from IMP. This is Adenylosuccinate synthetase 1 from Trypanosoma cruzi (strain CL Brener).